Here is a 367-residue protein sequence, read N- to C-terminus: Probable butyrate kinase (367 aa).

The protein belongs to the acetokinase family.

It localises to the cytoplasm. The catalysed reaction is butanoate + ATP = butanoyl phosphate + ADP. This chain is Probable butyrate kinase, found in Bacillus cereus (strain ZK / E33L).